We begin with the raw amino-acid sequence, 316 residues long: Transaldolase B (316 aa).

Lysine 131 (schiff-base intermediate with substrate) is an active-site residue.

Belongs to the transaldolase family. Type 1 subfamily. In terms of assembly, homodimer.

It is found in the cytoplasm. It carries out the reaction D-sedoheptulose 7-phosphate + D-glyceraldehyde 3-phosphate = D-erythrose 4-phosphate + beta-D-fructose 6-phosphate. It participates in carbohydrate degradation; pentose phosphate pathway; D-glyceraldehyde 3-phosphate and beta-D-fructose 6-phosphate from D-ribose 5-phosphate and D-xylulose 5-phosphate (non-oxidative stage): step 2/3. Its function is as follows. Transaldolase is important for the balance of metabolites in the pentose-phosphate pathway. The protein is Transaldolase B (talB) of Pasteurella multocida (strain Pm70).